A 380-amino-acid polypeptide reads, in one-letter code: Probable protein phosphatase 2C 2 (380 aa).

The region spanning 122-376 is the PPM-type phosphatase domain; sequence GYSVYCKRGK…DDISVMLIQL (255 aa). Asp-158, Gly-159, Asp-321, and Asp-367 together coordinate Mn(2+).

This sequence belongs to the PP2C family. Mg(2+) is required as a cofactor. The cofactor is Mn(2+).

It carries out the reaction O-phospho-L-seryl-[protein] + H2O = L-seryl-[protein] + phosphate. The enzyme catalyses O-phospho-L-threonyl-[protein] + H2O = L-threonyl-[protein] + phosphate. The polypeptide is Probable protein phosphatase 2C 2 (Arabidopsis thaliana (Mouse-ear cress)).